The primary structure comprises 201 residues: Retinol-binding protein 4 (201 aa).

Positions 1–18 (MEWVWALVLLAALGGGSA) are cleaved as a signal peptide. 3 disulfide bridges follow: C22–C178, C88–C192, and C138–C147. Q116 contributes to the substrate binding site. Position 139 is an omega-N-methylarginine (R139).

The protein belongs to the calycin superfamily. Lipocalin family. In terms of assembly, interacts with TTR. Interaction with TTR prevents its loss by filtration through the kidney glomeruli. Interacts with STRA6. Detected in blood plasma (at protein level).

It is found in the secreted. Its function is as follows. Retinol-binding protein that mediates retinol transport in blood plasma. Delivers retinol from the liver stores to the peripheral tissues. Transfers the bound all-trans retinol to STRA6, that then facilitates retinol transport across the cell membrane. This Rattus norvegicus (Rat) protein is Retinol-binding protein 4 (Rbp4).